The chain runs to 341 residues: L-threonine 3-dehydrogenase (341 aa).

Residue Cys38 coordinates Zn(2+). Residues Thr40 and His43 each act as charge relay system in the active site. Residues His63, Glu64, Cys93, Cys96, Cys99, and Cys107 each coordinate Zn(2+). Residues Ile175, Asp195, Arg200, 262–264, and 286–287 each bind NAD(+); these read LGI and IY.

The protein belongs to the zinc-containing alcohol dehydrogenase family. As to quaternary structure, homotetramer. The cofactor is Zn(2+).

The protein localises to the cytoplasm. The catalysed reaction is L-threonine + NAD(+) = (2S)-2-amino-3-oxobutanoate + NADH + H(+). Its pathway is amino-acid degradation; L-threonine degradation via oxydo-reductase pathway; glycine from L-threonine: step 1/2. Functionally, catalyzes the NAD(+)-dependent oxidation of L-threonine to 2-amino-3-ketobutyrate. The protein is L-threonine 3-dehydrogenase of Shewanella frigidimarina (strain NCIMB 400).